The following is a 590-amino-acid chain: Vesicular glutamate transporter 3 (590 aa).

The Cytoplasmic segment spans residues 1–76 (MPLGGFAGLK…CGCFGLPKRY (76 aa)). A helical transmembrane segment spans residues 77 to 97 (IIAMLSGLGFCISFGIRCNLG). Residues 98–130 (VAIVEMVNNNTVYINGTAVMQPAQFNWDPETVG) are Vesicular-facing. 2 N-linked (GlcNAc...) asparagine glycosylation sites follow: asparagine 106 and asparagine 112. A helical transmembrane segment spans residues 131 to 151 (LIHGSFFWGYIVTQIPGGFIS). Residues 152–153 (NK) lie on the Cytoplasmic side of the membrane. Residues 154 to 174 (LAANRVFGAAIFLTSVLNMFI) form a helical membrane-spanning segment. Over 175–182 (PSAARVHY) the chain is Vesicular. Residues 183 to 203 (GCVMFVRILQGLVEGVTYPAC) form a helical membrane-spanning segment. The Cytoplasmic portion of the chain corresponds to 204–221 (HGMWSKWAPPLERSRLAT). Residues 222 to 242 (TSFCGSYAGAVIAMPLAGILV) form a helical membrane-spanning segment. Over 243–249 (QYVGWPS) the chain is Vesicular. Residues 250–270 (VFYIYGVFGIIWYIFWILLAY) form a helical membrane-spanning segment. Over 271 to 315 (NSPAVHPTISEEERNYIETSIGEGANLMSSTEKFKTPWREFFTSM) the chain is Cytoplasmic. The helical transmembrane segment at 316-336 (PVYAIIVANFCRSWTFYLLLI) threads the bilayer. Residues 337-354 (SQPAYFEEVFGFPISKVG) are Vesicular-facing. The chain crosses the membrane as a helical span at residues 355 to 375 (ILSAVPHMVMTIIVPIGGQLA). Residues 376–391 (DFLRSRKILSTTTVRK) are Cytoplasmic-facing. The helical transmembrane segment at 392 to 412 (IMNCGGFGMEATLLLVVGFSH) threads the bilayer. Topologically, residues 413–414 (TR) are vesicular. A helical transmembrane segment spans residues 415 to 435 (AVAISFLILAVGFSGFAISGF). The Cytoplasmic portion of the chain corresponds to 436-448 (NVNHLDIAPRYAS). The helical transmembrane segment at 449-469 (ILMGISNGVGTLSGMVCPLIV) threads the bilayer. Residues 470 to 482 (GALTKHKTRLEWQ) lie on the Vesicular side of the membrane. The chain crosses the membrane as a helical span at residues 483–503 (HVFVIASMVHYTGVIFYAIFA). Residues 504–587 (SGEKQDWADP…NHYENGEYQT (84 aa)) are Cytoplasmic-facing. Over residues 526 to 535 (EDELADETEP) the composition is skewed to acidic residues. A disordered region spans residues 526–590 (EDELADETEP…ENGEYQTQYQ (65 aa)). Residues 536-557 (SSDSGLATRQKTYGTTDNSSGR) are compositionally biased toward polar residues.

The protein belongs to the major facilitator superfamily. Sodium/anion cotransporter family. VGLUT subfamily.

The protein resides in the cytoplasmic vesicle. The protein localises to the secretory vesicle. It is found in the synaptic vesicle membrane. It localises to the cell membrane. Its subcellular location is the synapse. The protein resides in the synaptosome. It catalyses the reaction L-glutamate(out) = L-glutamate(in). The enzyme catalyses 3 Na(+)(out) + phosphate(out) = 3 Na(+)(in) + phosphate(in). The catalysed reaction is chloride(in) = chloride(out). Its activity is regulated as follows. The L-glutamate uniporter activity exhibits a biphasic dependence on chloride concentration. Chloride channel activity is allosterically activated by lumenal H(+) and Cl(-) leading to synaptic vesicles acidification. The glutamate transport activity is allosterically activated by lumenal H(+) and Cl(-), preventing non-vesicular L-glutamate release. Multifunctional transporter that transports L-glutamate as well as multiple ions such as chloride, sodium and phosphate. At the synaptic vesicle membrane, mainly functions as an uniporter that mediates the uptake of L-glutamate into synaptic vesicles at presynaptic nerve terminals of excitatory neural cells. The L-glutamate uniporter activity is electrogenic and is driven by the proton electrochemical gradient, mainly by the electrical gradient established by the vacuolar H(+)-ATPase across the synaptic vesicle membrane. In addition, functions as a chloride channel that allows a chloride permeation through the synaptic vesicle membrane that affects the proton electrochemical gradient and promotes synaptic vesicles acidification. At the plasma membrane, following exocytosis, functions as a symporter of Na(+) and phosphate from the extracellular space to the cytoplasm allowing synaptic phosphate homeostasis regulation. The symporter activity is electrogenic. Moreover, operates synergistically with SLC18A3/VACHT under a constant H(+) gradient, thereby allowing striatal vesicular acetylcholine uptake. This is Vesicular glutamate transporter 3 from Danio rerio (Zebrafish).